The chain runs to 883 residues: Brevican core protein (883 aa).

A signal peptide spans methionine 1 to alanine 22. Residues phenylalanine 35–lysine 154 form the Ig-like V-type domain. 5 disulfide bridges follow: cysteine 56/cysteine 136, cysteine 178/cysteine 249, cysteine 202/cysteine 223, cysteine 276/cysteine 351, and cysteine 300/cysteine 321. Asparagine 129 carries N-linked (GlcNAc...) asparagine glycosylation. 2 Link domains span residues valine 156–alanine 251 and glycine 256–arginine 353. At serine 224 the chain carries Phosphoserine. Asparagine 336 is a glycosylation site (N-linked (GlcNAc...) asparagine). The segment at serine 402–glycine 592 is disordered. At serine 413 the chain carries Phosphoserine. A glycan (O-linked (Xyl...) (chondroitin sulfate) serine) is linked at serine 413. 2 stretches are compositionally biased toward acidic residues: residues serine 440–glutamate 451 and alanine 459–aspartate 468. Over residues proline 479–proline 495 the composition is skewed to polar residues. Residues arginine 581–glycine 592 show a composition bias toward basic and acidic residues. Positions serine 622 to aspartate 658 constitute an EGF-like domain. 8 disulfides stabilise this stretch: cysteine 626-cysteine 637, cysteine 631-cysteine 646, cysteine 648-cysteine 657, cysteine 664-cysteine 675, cysteine 692-cysteine 784, cysteine 760-cysteine 776, cysteine 791-cysteine 834, and cysteine 820-cysteine 847. A C-type lectin domain is found at aspartate 658–methionine 786. The Sushi domain occupies valine 789–proline 849. The disordered stretch occupies residues arginine 854–leucine 883.

It belongs to the aggrecan/versican proteoglycan family. Interacts with TNR. O-glycosylated; contains chondroitin sulfate. Expressed in the retina, specifically around the inner and outer segments of photoreceptors, retinal pigment epithelium, outer plexiform layer, and the ganglion cell layer (at protein level). Brain. Expressed in the brainstem and cerebellum in a perineuronal net pattern.

The protein localises to the secreted. Its subcellular location is the extracellular space. It is found in the extracellular matrix. In terms of biological role, may play a role in the terminally differentiating and the adult nervous system during postnatal development. Could stabilize interactions between hyaluronan (HA) and brain proteoglycans. In Mus musculus (Mouse), this protein is Brevican core protein (Bcan).